We begin with the raw amino-acid sequence, 1005 residues long: Retinoblastoma-related protein (1005 aa).

The domain A stretch occupies residues 404–605 (TPVSTAMTTA…EKGSSMYNSL (202 aa)). The segment at 404–853 (TPVSTAMTTA…NEIFIPSVKP (450 aa)) is pocket. The segment at 606–722 (TIARPNLSNE…HPTRGETCAE (117 aa)) is spacer. Positions 723 to 853 (TAVNLFFSKI…NEIFIPSVKP (131 aa)) are domain B. The span at 863-873 (VPKNPNNQVSE) shows a compositional bias: polar residues. A disordered region spans residues 863 to 899 (VPKNPNNQVSETNKKDESGPCPCPGSPKVSSFPSLPD).

Belongs to the retinoblastoma protein (RB) family.

It is found in the nucleus. Regulator of biological processes that recruits a histone deacetylase to control gene transcription. May play a role in the entry into mitosis, negatively regulating the cell proliferation. Formation of stable complexes with geminiviridae replication-associated proteins may create a cellular environment which favors viral DNA replication. This Pilosella piloselloides (Glaucous king-devil hawkweed) protein is Retinoblastoma-related protein (RBR).